The sequence spans 223 residues: Ribose-5-phosphate isomerase A (223 aa).

Residues 32–35, 85–88, and 98–101 contribute to the substrate site; these read TGST, DGAD, and KGGG. Catalysis depends on Glu107, which acts as the Proton acceptor. Lys125 provides a ligand contact to substrate.

Belongs to the ribose 5-phosphate isomerase family. In terms of assembly, homodimer.

The catalysed reaction is aldehydo-D-ribose 5-phosphate = D-ribulose 5-phosphate. The protein operates within carbohydrate degradation; pentose phosphate pathway; D-ribose 5-phosphate from D-ribulose 5-phosphate (non-oxidative stage): step 1/1. In terms of biological role, catalyzes the reversible conversion of ribose-5-phosphate to ribulose 5-phosphate. The sequence is that of Ribose-5-phosphate isomerase A from Stutzerimonas stutzeri (strain A1501) (Pseudomonas stutzeri).